The primary structure comprises 97 residues: Glutamyl-tRNA(Gln) amidotransferase subunit C 2 (97 aa).

This sequence belongs to the GatC family. In terms of assembly, heterotrimer of A, B and C subunits.

It carries out the reaction L-glutamyl-tRNA(Gln) + L-glutamine + ATP + H2O = L-glutaminyl-tRNA(Gln) + L-glutamate + ADP + phosphate + H(+). The enzyme catalyses L-aspartyl-tRNA(Asn) + L-glutamine + ATP + H2O = L-asparaginyl-tRNA(Asn) + L-glutamate + ADP + phosphate + 2 H(+). Allows the formation of correctly charged Asn-tRNA(Asn) or Gln-tRNA(Gln) through the transamidation of misacylated Asp-tRNA(Asn) or Glu-tRNA(Gln) in organisms which lack either or both of asparaginyl-tRNA or glutaminyl-tRNA synthetases. The reaction takes place in the presence of glutamine and ATP through an activated phospho-Asp-tRNA(Asn) or phospho-Glu-tRNA(Gln). This chain is Glutamyl-tRNA(Gln) amidotransferase subunit C 2 (gatC2), found in Clostridium acetobutylicum (strain ATCC 824 / DSM 792 / JCM 1419 / IAM 19013 / LMG 5710 / NBRC 13948 / NRRL B-527 / VKM B-1787 / 2291 / W).